The following is a 354-amino-acid chain: Glycine betaine/proline betaine transport system permease protein ProW (354 aa).

The disordered stretch occupies residues 1–41 (MADQNNPWDTTPAADSAAQSADAWGTPTTAPTDGGGADWLT). Topologically, residues 1 to 99 (MADQNNPWDT…VDYILNGFQQ (99 aa)) are cytoplasmic. A compositionally biased stretch (low complexity) spans 13 to 32 (AADSAAQSADAWGTPTTAPT). Residues 100 to 120 (LLLGMPAPVAIIVFALIAWQI) form a helical membrane-spanning segment. Residue S121 is a topological domain, periplasmic. A helical membrane pass occupies residues 122–142 (GVGMGVATLVSLIAIGAIGAW). The Cytoplasmic segment spans residues 143–148 (SQAMVT). The ABC transmembrane type-1 domain maps to 145–324 (AMVTLALVLT…ILAIILDRLT (180 aa)). Residues 149–169 (LALVLTALLFCIVIGLPLGIW) form a helical membrane-spanning segment. The Periplasmic segment spans residues 170 to 198 (LARSPRAAKIIRPLLDAMQTTPAFVYLVP). The chain crosses the membrane as a helical span at residues 199–219 (IVMLFGIGNVPGVVVTIIFAL). The Cytoplasmic segment spans residues 220–270 (PPIIRLTILGINQVPADLIEASRSFGASPRQMLFKVQLPLAMPTIMAGVNQ). The helical transmembrane segment at 271-291 (TLMLALSMVVIASMIAVGGLG) threads the bilayer. At 292–300 (QMVLRGIGR) the chain is on the periplasmic side. The chain crosses the membrane as a helical span at residues 301 to 321 (LDMGLATVGGVGIVILAIILD). Residues 322 to 354 (RLTQAVGRDSRSRGNRRWYTTGPVGLLTRPFIK) lie on the Cytoplasmic side of the membrane.

Belongs to the binding-protein-dependent transport system permease family. CysTW subfamily. As to quaternary structure, the complex is composed of two ATP-binding proteins (ProV), two transmembrane proteins (ProW) and a solute-binding protein (ProX).

It localises to the cell inner membrane. In terms of biological role, part of the ProU ABC transporter complex involved in glycine betaine and proline betaine uptake. Probably responsible for the translocation of the substrate across the membrane. The chain is Glycine betaine/proline betaine transport system permease protein ProW from Escherichia coli (strain K12).